Here is a 157-residue protein sequence, read N- to C-terminus: Peroxiredoxin Bcp (157 aa).

The 154-residue stretch at 3 to 156 (IEIGQKAPDL…ALQTLKDMSE (154 aa)) folds into the Thioredoxin domain. Residue Cys-45 is the Cysteine sulfenic acid (-SOH) intermediate of the active site. Residues Cys-45 and Cys-50 are joined by a disulfide bond.

The protein belongs to the peroxiredoxin family. BCP/PrxQ subfamily. In terms of assembly, monomer.

It catalyses the reaction a hydroperoxide + [thioredoxin]-dithiol = an alcohol + [thioredoxin]-disulfide + H2O. Thiol-specific peroxidase that catalyzes the reduction of hydrogen peroxide and organic hydroperoxides to water and alcohols, respectively. Plays a role in cell protection against oxidative stress by detoxifying peroxides and as sensor of hydrogen peroxide-mediated signaling events. The polypeptide is Peroxiredoxin Bcp (ygaF) (Bacillus subtilis (strain 168)).